The following is a 382-amino-acid chain: Gas vesicle protein C1 (382 aa).

Positions 1–18 are enriched in basic and acidic residues; sequence MSVTDKRDEMSTARDKFA. The tract at residues 1 to 21 is disordered; sequence MSVTDKRDEMSTARDKFAESQ. Tandem repeats lie at residues 22–60, 61–92, 93–130, 131–168, 169–200, 201–240, and 241–284. A 7 X approximate tandem repeats region spans residues 22–284; the sequence is QEFESYADEF…VEAEAEVSPD (263 aa). Positions 260–302 are enriched in acidic residues; the sequence is GAAEAEAEPVEADADVEAEAEVSPDEAGGESAGTEEEETEPAE. Positions 260–382 are disordered; that stretch reads GAAEAEAEPV…DVPLRPDDKT (123 aa). Low complexity predominate over residues 303 to 316; it reads VETAAPEVEGSPAD. The segment covering 317 to 336 has biased composition (acidic residues); it reads TADEAEDTEAEEETEEEAPE. The span at 365–382 shows a compositional bias: basic and acidic residues; sequence EYRDEYGEDVPLRPDDKT.

Belongs to the halobacterial gas vesicle GvpC family. As to quaternary structure, forms homodimers, interacts with GvpF1, GvpH1, GvpI1, GvpL1, GvpN1 and GvpO1 via its C-terminus (residues 329-382).

It localises to the gas vesicle. The protein resides in the cytoplasm. Confers stability, involved in shaping gas vesicles. Gas vesicles are hollow, gas filled proteinaceous nanostructures found in several microbial planktonic microorganisms. They allow positioning of halobacteria at the optimal depth for growth in the poorly aerated, shallow brine pools of their habitat. Its function is as follows. Expression of a 9.5 kb p-vac DNA fragment containing 2 divergently transcribed regions (gvpD-gvpE-gvpF-gvpG-gvpH-gvpI-gvpJ-gvpK-gvpL-gvpM and gvpA-gvpC-gvpN-gvpO) allows H.volcanii to produce gas vesicles. A similar region restores gas vesicle production in H.halobium without the p-vac locus, but it still has the c-vac locus. This Halobacterium salinarum (strain ATCC 700922 / JCM 11081 / NRC-1) (Halobacterium halobium) protein is Gas vesicle protein C1 (gvpC1).